The sequence spans 229 residues: Somatolactin (229 aa).

An N-terminal signal peptide occupies residues 1–24; sequence MHLVSVIQRGVWAVLLWPNLLASS. Cystine bridges form between Cys-29–Cys-39, Cys-87–Cys-203, and Cys-220–Cys-228. Asn-143 and Asn-175 each carry an N-linked (GlcNAc...) asparagine glycan.

This sequence belongs to the somatotropin/prolactin family.

It localises to the secreted. In Cyclopterus lumpus (Lumpsucker), this protein is Somatolactin.